A 208-amino-acid chain; its full sequence is MADQLTIALSKGRIYKDTLPLLEAANIIPQEDPSKSRKLIIPTNHEHVRLLIVRATDAPTYVAHGAADIGVAGKDVLMEAPSDNLNELLDLQIAKCKLMVAGPKEAKPHGHRLKIATKYIQSAKAYYAQKGQQVDLIKLYGSMEIAPLIDLADKIVDLVDTGNTLKANGLVPEEHIADISSRLIVNEHAYKTKFKQINDIVEKFRSAI.

This sequence belongs to the ATP phosphoribosyltransferase family. Short subfamily. Heteromultimer composed of HisG and HisZ subunits.

Its subcellular location is the cytoplasm. The enzyme catalyses 1-(5-phospho-beta-D-ribosyl)-ATP + diphosphate = 5-phospho-alpha-D-ribose 1-diphosphate + ATP. Its pathway is amino-acid biosynthesis; L-histidine biosynthesis; L-histidine from 5-phospho-alpha-D-ribose 1-diphosphate: step 1/9. In terms of biological role, catalyzes the condensation of ATP and 5-phosphoribose 1-diphosphate to form N'-(5'-phosphoribosyl)-ATP (PR-ATP). Has a crucial role in the pathway because the rate of histidine biosynthesis seems to be controlled primarily by regulation of HisG enzymatic activity. The polypeptide is ATP phosphoribosyltransferase (Hydrogenovibrio crunogenus (strain DSM 25203 / XCL-2) (Thiomicrospira crunogena)).